Consider the following 156-residue polypeptide: Small ribosomal subunit protein uS7 (156 aa).

This sequence belongs to the universal ribosomal protein uS7 family. In terms of assembly, part of the 30S ribosomal subunit. Contacts proteins S9 and S11.

In terms of biological role, one of the primary rRNA binding proteins, it binds directly to 16S rRNA where it nucleates assembly of the head domain of the 30S subunit. Is located at the subunit interface close to the decoding center, probably blocks exit of the E-site tRNA. This Vibrio atlanticus (strain LGP32) (Vibrio splendidus (strain Mel32)) protein is Small ribosomal subunit protein uS7.